The primary structure comprises 832 residues: FAST kinase domain-containing protein 1, mitochondrial (832 aa).

An RAP domain is found at Val-765–Lys-825.

The protein belongs to the FAST kinase family.

The protein localises to the mitochondrion. In terms of biological role, may regulate the stability of some mitochondrial mRNA species. The sequence is that of FAST kinase domain-containing protein 1, mitochondrial (fastkd1) from Xenopus laevis (African clawed frog).